The sequence spans 354 residues: Neuronal growth regulator 1 (354 aa).

The N-terminal stretch at 1-37 (MDMMLLVQGACCSNQWLAAVLLSLCCLLPSCLPAGQS) is a signal peptide. Ig-like C2-type domains lie at 38 to 134 (VDFP…VHLT), 139 to 221 (PKIY…KVVV), and 225 to 313 (PTIQ…LPLN). A disulfide bond links Cys-60 and Cys-118. Asn-73 and Asn-155 each carry an N-linked (GlcNAc...) asparagine glycan. Disulfide bonds link Cys-160–Cys-203 and Cys-245–Cys-297. Tyr-187 is subject to Phosphotyrosine. Residues Asn-275, Asn-286, Asn-294, and Asn-307 are each glycosylated (N-linked (GlcNAc...) asparagine). Gly-324 is lipidated: GPI-anchor amidated glycine. A propeptide spans 325-354 (SADVLFSCWYLVLTLSSFTSIFYLKNAILQ) (removed in mature form).

It belongs to the immunoglobulin superfamily. IgLON family.

The protein localises to the cell membrane. In terms of biological role, may be involved in cell-adhesion. May function as a trans-neural growth-promoting factor in regenerative axon sprouting in the mammalian brain. In Homo sapiens (Human), this protein is Neuronal growth regulator 1 (NEGR1).